A 379-amino-acid chain; its full sequence is Alanine racemase (379 aa).

Lysine 37 (proton acceptor; specific for D-alanine) is an active-site residue. Lysine 37 is subject to N6-(pyridoxal phosphate)lysine. Arginine 139 contributes to the substrate binding site. The Proton acceptor; specific for L-alanine role is filled by tyrosine 266. Residue methionine 314 participates in substrate binding.

Belongs to the alanine racemase family. Pyridoxal 5'-phosphate serves as cofactor.

It carries out the reaction L-alanine = D-alanine. It functions in the pathway amino-acid biosynthesis; D-alanine biosynthesis; D-alanine from L-alanine: step 1/1. Its function is as follows. Catalyzes the interconversion of L-alanine and D-alanine. May also act on other amino acids. This is Alanine racemase (alr) from Sorangium cellulosum (strain So ce56) (Polyangium cellulosum (strain So ce56)).